We begin with the raw amino-acid sequence, 429 residues long: Adenylosuccinate synthetase (429 aa).

GTP is bound by residues 12 to 18 and 40 to 42; these read GDEGKGK and GHT. The Proton acceptor role is filled by Asp-13. The Mg(2+) site is built by Asp-13 and Gly-40. IMP is bound by residues 13–16, 38–41, Thr-127, Arg-141, Gln-222, Thr-237, and Arg-301; these read DEGK and NAGH. The active-site Proton donor is His-41. 297-303 contributes to the substrate binding site; sequence ATTGRPR. GTP is bound by residues Arg-303, 329–331, and 411–413; these read KLD and SLG.

It belongs to the adenylosuccinate synthetase family. As to quaternary structure, homodimer. The cofactor is Mg(2+).

The protein resides in the cytoplasm. It carries out the reaction IMP + L-aspartate + GTP = N(6)-(1,2-dicarboxyethyl)-AMP + GDP + phosphate + 2 H(+). Its pathway is purine metabolism; AMP biosynthesis via de novo pathway; AMP from IMP: step 1/2. Functionally, plays an important role in the de novo pathway of purine nucleotide biosynthesis. Catalyzes the first committed step in the biosynthesis of AMP from IMP. The sequence is that of Adenylosuccinate synthetase from Endomicrobium trichonymphae.